The chain runs to 349 residues: Twinfilin-2 (349 aa).

ADF-H domains lie at 4–139 and 177–313; these read QTGI…KHVS and GLAF…DEVH. The interval 324 to 349 is disordered; it reads AKPKGPVGKRGQKRLIKGPGENGEDS.

The protein belongs to the actin-binding proteins ADF family. Twinfilin subfamily. In terms of assembly, interacts with G-actin; ADP-actin form and capping protein (CP).

It localises to the cytoplasm. Its subcellular location is the cytoskeleton. The protein resides in the perinuclear region. Functionally, actin-binding protein involved in motile and morphological processes. Inhibits actin polymerization, likely by sequestering G-actin. This chain is Twinfilin-2 (TWF2), found in Gallus gallus (Chicken).